The following is a 163-amino-acid chain: Odorant-binding protein 1a (163 aa).

The signal sequence occupies residues 1 to 16 (MAKFLLLALTFGLAHA). 2 cysteine pairs are disulfide-bonded: Cys50–Cys54 and Cys69–Cys161.

It belongs to the calycin superfamily. Lipocalin family. May form a heterodimer with OBP1B. Post-translationally, the N-terminus may be blocked. As to expression, expressed in nasal mucosa (at protein level). Specifically detected in septal and lateral nasal glands.

The protein localises to the secreted. In terms of biological role, binds the chemical odorant 2-isobutyl-3-methoxypyrazine. The chain is Odorant-binding protein 1a from Mus musculus (Mouse).